The primary structure comprises 168 residues: Ribosome maturation factor RimP (168 aa).

Belongs to the RimP family.

The protein localises to the cytoplasm. In terms of biological role, required for maturation of 30S ribosomal subunits. This chain is Ribosome maturation factor RimP, found in Syntrophobacter fumaroxidans (strain DSM 10017 / MPOB).